A 306-amino-acid polypeptide reads, in one-letter code: Ornithine carbamoyltransferase (306 aa).

Residues 53-56 (STRT), Q80, R104, and 131-134 (HPCQ) contribute to the carbamoyl phosphate site. Residues N162, D219, and 223-224 (SM) each bind L-ornithine. Carbamoyl phosphate-binding positions include 259–260 (CL) and R287.

The protein belongs to the aspartate/ornithine carbamoyltransferase superfamily. OTCase family.

It is found in the cytoplasm. It carries out the reaction carbamoyl phosphate + L-ornithine = L-citrulline + phosphate + H(+). It participates in amino-acid biosynthesis; L-arginine biosynthesis; L-arginine from L-ornithine and carbamoyl phosphate: step 1/3. In terms of biological role, reversibly catalyzes the transfer of the carbamoyl group from carbamoyl phosphate (CP) to the N(epsilon) atom of ornithine (ORN) to produce L-citrulline. This is Ornithine carbamoyltransferase from Acinetobacter baumannii (strain ATCC 17978 / DSM 105126 / CIP 53.77 / LMG 1025 / NCDC KC755 / 5377).